A 419-amino-acid polypeptide reads, in one-letter code: UDP-arabinose 4-epimerase 1 (419 aa).

A disordered region spans residues 1–21; the sequence is MFSFGRARSQGRQNRSMSLGG. The Cytoplasmic portion of the chain corresponds to 1–32; that stretch reads MFSFGRARSQGRQNRSMSLGGLDYADPKKKNN. A helical; Signal-anchor for type II membrane protein membrane pass occupies residues 33-51; the sequence is YLGKILLTASLTALCIFML. At 52 to 419 the chain is on the lumenal side; sequence KQSPTFNTPS…GLTTSSVSVY (368 aa). An NAD(+)-binding site is contributed by 72-103; sequence HVLVTGGAGYIGSHAALRLLKESYRVTIVDNL. The Proton acceptor role is filled by Tyr220.

Belongs to the NAD(P)-dependent epimerase/dehydratase family. It depends on NAD(+) as a cofactor. High expression in roots. Also found in leaves, stems, flowers, and siliques.

It localises to the golgi apparatus. Its subcellular location is the golgi stack membrane. The enzyme catalyses UDP-beta-L-arabinopyranose = UDP-alpha-D-xylose. Its pathway is nucleotide-sugar biosynthesis; UDP-L-arabinose biosynthesis; UDP-L-arabinose from UDP-alpha-D-xylose: step 1/1. It participates in cell wall biogenesis; cell wall polysaccharide biosynthesis. Its function is as follows. Acts as a UDP-D-xylose 4-epimerase but lacks both UDP-D-glucose and UDP-D-glucuronic acid 4-epimerase activities in vitro. The sequence is that of UDP-arabinose 4-epimerase 1 from Arabidopsis thaliana (Mouse-ear cress).